Here is a 180-residue protein sequence, read N- to C-terminus: Ribulose bisphosphate carboxylase small subunit, chloroplastic (180 aa).

Residues 1–56 constitute a chloroplast transit peptide; sequence MASSVLSSAAVATRSNVAQANMVAPFTGLKSAASFPVSRKQNLDITSIASNGGRVQ.

It belongs to the RuBisCO small chain family. In terms of assembly, heterohexadecamer of 8 large and 8 small subunits.

The protein resides in the plastid. It localises to the chloroplast. In terms of biological role, ruBisCO catalyzes two reactions: the carboxylation of D-ribulose 1,5-bisphosphate, the primary event in carbon dioxide fixation, as well as the oxidative fragmentation of the pentose substrate. Both reactions occur simultaneously and in competition at the same active site. Although the small subunit is not catalytic it is essential for maximal activity. In Nicotiana plumbaginifolia (Leadwort-leaved tobacco), this protein is Ribulose bisphosphate carboxylase small subunit, chloroplastic.